Reading from the N-terminus, the 404-residue chain is Starvation-sensing protein RspA (404 aa).

The protein belongs to the mandelate racemase/muconate lactonizing enzyme family.

Its function is as follows. Probably involved in the degradation of homoserine lactone (HSL) or of a metabolite of HSL that signals starvation. This Escherichia coli (strain K12) protein is Starvation-sensing protein RspA.